Here is a 96-residue protein sequence, read N- to C-terminus: Xylulose kinase (96 aa).

Residue 71 to 72 participates in substrate binding; that stretch reads QH.

Belongs to the FGGY kinase family.

The catalysed reaction is D-xylulose + ATP = D-xylulose 5-phosphate + ADP + H(+). In terms of biological role, catalyzes the phosphorylation of D-xylulose to D-xylulose 5-phosphate. This chain is Xylulose kinase, found in Arthrobacter sp. (strain NRRL B3728).